The sequence spans 342 residues: Aromatic amino acid aminotransferase (342 aa).

An N6-(pyridoxal phosphate)lysine modification is found at Lys214.

The protein belongs to the class-II pyridoxal-phosphate-dependent aminotransferase family. As to quaternary structure, homodimer. The cofactor is pyridoxal 5'-phosphate.

It carries out the reaction an aromatic L-alpha-amino acid + 2-oxoglutarate = an aromatic oxo-acid + L-glutamate. Functionally, aminotransferase that catalyzes the conversion of aromatic amino acids and 2-oxoglutarate into corresponding aromatic oxo acids and L-glutamate. The sequence is that of Aromatic amino acid aminotransferase from Corynebacterium efficiens (strain DSM 44549 / YS-314 / AJ 12310 / JCM 11189 / NBRC 100395).